The chain runs to 294 residues: Osteopontin (294 aa).

An N-terminal signal peptide occupies residues 1–16 (MRLAVICFCLFGIASS). 13 positions are modified to phosphoserine: Ser24, Ser26, Ser27, Ser61, Ser62, Ser75, Ser77, Ser80, Ser106, Ser109, Ser112, Ser115, and Ser118. The tract at residues 42–274 (WLVPDPSQKQ…LVLDPKSKED (233 aa)) is disordered. The span at 48 to 61 (SQKQNLLAPQNAVS) shows a compositional bias: polar residues. The segment covering 85-110 (DDDDDDDDDDGDHAESEDSVDSDESD) has biased composition (acidic residues). The span at 121-130 (TVTASTQADT) shows a compositional bias: polar residues. Thr123, Thr132, and Thr137 each carry an O-linked (GalNAc...) threonine glycan. Positions 144-146 (RGD) match the Cell attachment site motif. Residues Thr170 and Thr175 each carry the phosphothreonine modification. The segment covering 174–187 (LTSHMKSGESKESL) has biased composition (basic and acidic residues). 6 positions are modified to phosphoserine: Ser176, Ser180, Ser200, Ser209, Ser213, and Ser219. A compositionally biased stretch (polar residues) spans 197-216 (SMPSDQDNNGKGSHESSQLD). A glycan (O-linked (Xyl...) (chondroitin sulfate) serine) is linked at Ser219. Basic and acidic residues predominate over residues 220–232 (LETHRLEHSKESQ). Residue Thr222 is modified to Phosphothreonine. Phosphoserine occurs at positions 228, 231, 234, 238, 243, 247, 250, 255, 260, 271, 283, 288, 290, and 291. Residues 234–249 (SADQSDVIDSQASSKA) show a composition bias toward polar residues. Basic and acidic residues predominate over residues 263–274 (DKLVLDPKSKED). O-linked (Xyl...) (chondroitin sulfate) serine glycosylation is present at Ser288.

Belongs to the osteopontin family. Interacts (via N-terminus) with integrin ITGA9:ITGB1. In terms of processing, extensively phosphorylated by FAM20C in the extracellular medium at multiple sites within the S-x-E/pS motif. The phosphorylated form inhibits hydroxyapatite crystallization. Dephosphorylation via a mechanism involving ALPL/TNAP promotes hydroxyapatite crystallization. Post-translationally, O-glycosylated. Forms covalent cross-links mediated by transglutaminase TGM2, between a glutamine and the epsilon-amino group of a lysine residue, forming homopolymers and heteropolymers, increasing its collagen binding properties.

The protein localises to the secreted. Its function is as follows. Major non-collagenous bone protein that binds tightly to hydroxyapatite. Appears to form an integral part of the mineralized matrix. Probably important to cell-matrix interaction. Functionally, acts as a cytokine involved in enhancing production of interferon-gamma and interleukin-12 and reducing production of interleukin-10 and is essential in the pathway that leads to type I immunity. In Mus musculus (Mouse), this protein is Osteopontin (Spp1).